The chain runs to 79 residues: Cell division protein ZapB (79 aa).

Residues 4-78 (EVFEKLEAKV…LQALLGKMEE (75 aa)) are a coiled coil.

The protein belongs to the ZapB family. Homodimer. The ends of the coiled-coil dimer bind to each other, forming polymers. Interacts with FtsZ.

It is found in the cytoplasm. Non-essential, abundant cell division factor that is required for proper Z-ring formation. It is recruited early to the divisome by direct interaction with FtsZ, stimulating Z-ring assembly and thereby promoting cell division earlier in the cell cycle. Its recruitment to the Z-ring requires functional FtsA or ZipA. This is Cell division protein ZapB from Cronobacter sakazakii (strain ATCC BAA-894) (Enterobacter sakazakii).